A 354-amino-acid polypeptide reads, in one-letter code: UDP-3-O-acylglucosamine N-acyltransferase (354 aa).

The active-site Proton acceptor is the H247.

The protein belongs to the transferase hexapeptide repeat family. LpxD subfamily. As to quaternary structure, homotrimer.

The enzyme catalyses a UDP-3-O-[(3R)-3-hydroxyacyl]-alpha-D-glucosamine + a (3R)-hydroxyacyl-[ACP] = a UDP-2-N,3-O-bis[(3R)-3-hydroxyacyl]-alpha-D-glucosamine + holo-[ACP] + H(+). The protein operates within bacterial outer membrane biogenesis; LPS lipid A biosynthesis. Functionally, catalyzes the N-acylation of UDP-3-O-acylglucosamine using 3-hydroxyacyl-ACP as the acyl donor. Is involved in the biosynthesis of lipid A, a phosphorylated glycolipid that anchors the lipopolysaccharide to the outer membrane of the cell. This chain is UDP-3-O-acylglucosamine N-acyltransferase, found in Chlamydia trachomatis serovar L2 (strain ATCC VR-902B / DSM 19102 / 434/Bu).